Consider the following 323-residue polypeptide: tRNA dimethylallyltransferase (323 aa).

ATP is bound at residue 12–19; it reads GPTAAGKT. Position 14-19 (14-19) interacts with substrate; that stretch reads TAAGKT. Interaction with substrate tRNA regions lie at residues 37 to 40 and 161 to 165; these read DSAL and QRLIR.

This sequence belongs to the IPP transferase family. Monomer. Mg(2+) serves as cofactor.

The catalysed reaction is adenosine(37) in tRNA + dimethylallyl diphosphate = N(6)-dimethylallyladenosine(37) in tRNA + diphosphate. In terms of biological role, catalyzes the transfer of a dimethylallyl group onto the adenine at position 37 in tRNAs that read codons beginning with uridine, leading to the formation of N6-(dimethylallyl)adenosine (i(6)A). The sequence is that of tRNA dimethylallyltransferase from Pseudomonas syringae pv. syringae (strain B728a).